The chain runs to 698 residues: DNA ligase (698 aa).

Residues 40-44 (DGEYD), 89-90 (SL), and Glu-123 contribute to the NAD(+) site. The active-site N6-AMP-lysine intermediate is Lys-125. Arg-146, Glu-184, Lys-300, and Lys-324 together coordinate NAD(+). 4 residues coordinate Zn(2+): Cys-418, Cys-421, Cys-436, and Cys-442. The BRCT domain occupies 620 to 698 (AGDSPLAGKT…EAEFRAMSGG (79 aa)).

The protein belongs to the NAD-dependent DNA ligase family. LigA subfamily. Mg(2+) serves as cofactor. Requires Mn(2+) as cofactor.

It catalyses the reaction NAD(+) + (deoxyribonucleotide)n-3'-hydroxyl + 5'-phospho-(deoxyribonucleotide)m = (deoxyribonucleotide)n+m + AMP + beta-nicotinamide D-nucleotide.. DNA ligase that catalyzes the formation of phosphodiester linkages between 5'-phosphoryl and 3'-hydroxyl groups in double-stranded DNA using NAD as a coenzyme and as the energy source for the reaction. It is essential for DNA replication and repair of damaged DNA. The chain is DNA ligase from Rhodospirillum rubrum (strain ATCC 11170 / ATH 1.1.1 / DSM 467 / LMG 4362 / NCIMB 8255 / S1).